Here is a 360-residue protein sequence, read N- to C-terminus: Homeobox protein ceh-60 (360 aa).

The tract at residues 1-82 (MDNLIKQLQM…ENPTFPLEEV (82 aa)) is PBC-A. Positions 1–179 (MDNLIKQLQM…ILVLRREIEQ (179 aa)) constitute a PBC domain. Positions 85–179 (EKDEEWQPLE…ILVLRREIEQ (95 aa)) are PBC-B. The homeobox DNA-binding region spans 180–242 (QGRKRRNFDK…NQRIRTKQQA (63 aa)).

It belongs to the TALE/PBX homeobox family. In terms of assembly, forms a heterodimer with homeobox unc-62. Interacts with pqm-1.

Its subcellular location is the nucleus. Its function is as follows. Probable transcription regulator which binds to DNA, repressing genes involved in longevity and stress, while activating genes involved in reproduction, such as the vitellogenins. Associates with homeobox unc-62 to regulate gene expression, including repression of genes involved in innate immunity. Required for intestinal expression of vitellogenin genes. Negatively modulates longevity, probably independently of effects on vitellogenesis. Involved in lipid homeostasis, contributing to the reallocation of intestinal lipids to the germline and to the formation of the cuticle. Associates with transcriptional regulator pqm-1 at the daf-16 associated element within the promoters of stress-responsive genes to regulate expression. The polypeptide is Homeobox protein ceh-60 (Caenorhabditis elegans).